The chain runs to 466 residues: 3-isopropylmalate dehydratase large subunit (466 aa).

3 residues coordinate [4Fe-4S] cluster: Cys-347, Cys-407, and Cys-410.

It belongs to the aconitase/IPM isomerase family. LeuC type 1 subfamily. In terms of assembly, heterodimer of LeuC and LeuD. Requires [4Fe-4S] cluster as cofactor.

It catalyses the reaction (2R,3S)-3-isopropylmalate = (2S)-2-isopropylmalate. The protein operates within amino-acid biosynthesis; L-leucine biosynthesis; L-leucine from 3-methyl-2-oxobutanoate: step 2/4. Functionally, catalyzes the isomerization between 2-isopropylmalate and 3-isopropylmalate, via the formation of 2-isopropylmaleate. This chain is 3-isopropylmalate dehydratase large subunit, found in Shewanella piezotolerans (strain WP3 / JCM 13877).